The following is a 337-amino-acid chain: MTTPTTLVEFQTALAAATGPDDAARAGAAERNGQLTKPPGALGLLEDLAIWYAGWRGDARPRITAPQVLVFAGNHGVAARGVSAFPPEVTVQMVANFAHGGAAINQLSDLAGATMSVHPIDLETPTADFTQGPAMSEAGVMAAIAVGWEAVDTDADLLVVGEMGIGNTTSAAAVANALYGGAPEDWTGRGTGVDEAGIALKSRIVAEGLAVNPEAATDPLQALRCLGGRELAAMAGAIAHARILHIPVILDGFICTAAAAVLECAVSGALDHAIAGHGSAEQAHARMLHHLGKTPLLQLGLRLGEGSGGALAIQILRGAIACHSGMATFAEAGVAGG.

Glu305 serves as the catalytic Proton acceptor.

Belongs to the CobT family.

The enzyme catalyses 5,6-dimethylbenzimidazole + nicotinate beta-D-ribonucleotide = alpha-ribazole 5'-phosphate + nicotinate + H(+). It functions in the pathway nucleoside biosynthesis; alpha-ribazole biosynthesis; alpha-ribazole from 5,6-dimethylbenzimidazole: step 1/2. Functionally, catalyzes the synthesis of alpha-ribazole-5'-phosphate from nicotinate mononucleotide (NAMN) and 5,6-dimethylbenzimidazole (DMB). In Jannaschia sp. (strain CCS1), this protein is Nicotinate-nucleotide--dimethylbenzimidazole phosphoribosyltransferase.